A 1026-amino-acid chain; its full sequence is Isoleucine--tRNA ligase (1026 aa).

A 'HIGH' region motif is present at residues Pro-51–His-61. Positions Lys-591 to Ser-595 match the 'KMSKS' region motif. Lys-594 provides a ligand contact to ATP.

Belongs to the class-I aminoacyl-tRNA synthetase family. IleS type 2 subfamily. As to quaternary structure, monomer. Zn(2+) is required as a cofactor.

The protein resides in the cytoplasm. It catalyses the reaction tRNA(Ile) + L-isoleucine + ATP = L-isoleucyl-tRNA(Ile) + AMP + diphosphate. In terms of biological role, catalyzes the attachment of isoleucine to tRNA(Ile). As IleRS can inadvertently accommodate and process structurally similar amino acids such as valine, to avoid such errors it has two additional distinct tRNA(Ile)-dependent editing activities. One activity is designated as 'pretransfer' editing and involves the hydrolysis of activated Val-AMP. The other activity is designated 'posttransfer' editing and involves deacylation of mischarged Val-tRNA(Ile). This chain is Isoleucine--tRNA ligase, found in Thermoplasma acidophilum (strain ATCC 25905 / DSM 1728 / JCM 9062 / NBRC 15155 / AMRC-C165).